The following is a 411-amino-acid chain: Allantoate amidohydrolase (411 aa).

Zn(2+)-binding residues include His81, Asp92, Glu127, and His190. Allantoate contacts are provided by Arg215, Asn275, and Arg288. Residue His382 coordinates Zn(2+).

Belongs to the peptidase M20 family. In terms of assembly, homodimer. Zn(2+) serves as cofactor.

Its subcellular location is the cytoplasm. It carries out the reaction allantoate + H2O + 2 H(+) = (S)-2-ureidoglycine + NH4(+) + CO2. Its pathway is nitrogen metabolism; (S)-allantoin degradation. With respect to regulation, sulfate could be an allosteric effector of the enzyme that is responsible for stabilizing substrate binding. In addition, this anion effector may act as a counterion during enzyme-mediated catalysis. Its function is as follows. Involved in the anaerobic nitrogen utilization via the assimilation of allantoin. Catalyzes specifically the hydrolysis of allantoate to yield CO2, NH3 and S-ureidoglycine, which is unstable and readily undergoes a second deamination by S-ureidoglycine aminohydrolase AllE to yield S-ureidoglycolate and NH3. In vivo, the spontaneous release of S-ureidoglycolate and ammonia from S-ureidoglycine appears to be too slow to sustain an efficient flux of nitrogen. The chain is Allantoate amidohydrolase from Escherichia coli (strain K12).